The following is a 471-amino-acid chain: Histone deacetylase 6 (471 aa).

Position 1 is an N-acetylmethionine (Met-1). Residues 20-333 (RVSYFYEPTI…WCYETAVAVG (314 aa)) are histone deacetylase. Catalysis depends on His-153, which acts as the Proton donor/acceptor. Residues Asp-188, His-190, and Asp-276 each coordinate Zn(2+). The disordered stretch occupies residues 389 to 471 (PSVQFQHTPP…PEPDVNPPSS (83 aa)). Over residues 453–463 (GEDEMDDDNPE) the composition is skewed to acidic residues.

This sequence belongs to the histone deacetylase family. HD type 1 subfamily. Interacts with Coi1, which functions in an SCF complex that recruits regulators for ubiquitination. Interacts with AHL22. Interacts with AS1. Part of the AS1 repressor complex composed of AS1, LBD6/AS2 and HDA6. Binds to EBS and SHL. Interacts with MBD6. Interacts with HDA5. Interacts with FLD. Zn(2+) is required as a cofactor. Not detected in leaves, stems, flowers and young siliques.

It is found in the nucleus. Its subcellular location is the nucleolus. It carries out the reaction N(6)-acetyl-L-lysyl-[histone] + H2O = L-lysyl-[histone] + acetate. Inhibited by trichostatin A. Its function is as follows. Responsible for the deacetylation of lysine residues on the N-terminal part of the core histones (H2A, H2B, H3 and H4). Might remove acetyl residues only from specific targets, such as rDNA repeats or complex transgenes. Histone deacetylation gives a tag for epigenetic repression and plays an important role in transcriptional regulation, cell cycle progression and developmental events. Histone deacetylases act via the formation of large multiprotein complexes. Required for rRNA gene silencing in nucleolar dominance. Plays a role in transgene silencing, but this effect seems to bee independent of the histone deacetylase activity. Part of the AS1 repressor complex to regulate the KNOX expression in leaf development. Binds to KNAT1, KNAT2, and KNATM chromatin. Involved in the regulation of flowering time. Forms a histone deacetylase complex with HDA5, FLD and MSI4/FVE that represses FLC gene expression to control flowering time. In Arabidopsis thaliana (Mouse-ear cress), this protein is Histone deacetylase 6.